The primary structure comprises 657 residues: Glycogen debranching enzyme (657 aa).

The active-site Nucleophile is Asp-336. The active-site Proton donor is the Glu-371. The tract at residues 460–479 is disordered; sequence ANGEENRDGTNNNYSNNHGK.

The protein belongs to the glycosyl hydrolase 13 family.

The enzyme catalyses Hydrolysis of (1-&gt;6)-alpha-D-glucosidic linkages to branches with degrees of polymerization of three or four glucose residues in limit dextrin.. Its pathway is glycan degradation; glycogen degradation. In terms of biological role, removes maltotriose and maltotetraose chains that are attached by 1,6-alpha-linkage to the limit dextrin main chain, generating a debranched limit dextrin. This chain is Glycogen debranching enzyme, found in Escherichia coli O17:K52:H18 (strain UMN026 / ExPEC).